The sequence spans 264 residues: Thymidylate synthase (264 aa).

A dUMP-binding site is contributed by R21. H51 contributes to the (6R)-5,10-methylene-5,6,7,8-tetrahydrofolate binding site. Residue 126–127 coordinates dUMP; it reads RR. The active-site Nucleophile is the C146. Residues 166–169, N177, and 207–209 each bind dUMP; these read RSAD and HLY. D169 contacts (6R)-5,10-methylene-5,6,7,8-tetrahydrofolate. A (6R)-5,10-methylene-5,6,7,8-tetrahydrofolate-binding site is contributed by A263.

It belongs to the thymidylate synthase family. Bacterial-type ThyA subfamily. Homodimer.

Its subcellular location is the cytoplasm. It catalyses the reaction dUMP + (6R)-5,10-methylene-5,6,7,8-tetrahydrofolate = 7,8-dihydrofolate + dTMP. It functions in the pathway pyrimidine metabolism; dTTP biosynthesis. Functionally, catalyzes the reductive methylation of 2'-deoxyuridine-5'-monophosphate (dUMP) to 2'-deoxythymidine-5'-monophosphate (dTMP) while utilizing 5,10-methylenetetrahydrofolate (mTHF) as the methyl donor and reductant in the reaction, yielding dihydrofolate (DHF) as a by-product. This enzymatic reaction provides an intracellular de novo source of dTMP, an essential precursor for DNA biosynthesis. This chain is Thymidylate synthase, found in Mesorhizobium japonicum (strain LMG 29417 / CECT 9101 / MAFF 303099) (Mesorhizobium loti (strain MAFF 303099)).